We begin with the raw amino-acid sequence, 156 residues long: Small ribosomal subunit protein uS7 (156 aa).

The protein belongs to the universal ribosomal protein uS7 family. In terms of assembly, part of the 30S ribosomal subunit. Contacts proteins S9 and S11.

Its function is as follows. One of the primary rRNA binding proteins, it binds directly to 16S rRNA where it nucleates assembly of the head domain of the 30S subunit. Is located at the subunit interface close to the decoding center, probably blocks exit of the E-site tRNA. This Streptococcus thermophilus (strain CNRZ 1066) protein is Small ribosomal subunit protein uS7.